The sequence spans 367 residues: MWKALSLTLALCLLVGCSAESETEGARCKLPPEWKVGDVEPMKNALGQVTVVAYLQASULFCLEQASKLNDLLLKLENQGYPNIAYMVVNNREERSQRLHHLLQERLLNITLYAQDLSQPDAWQAVNAEKDDILVYDRCGRLTYHLSLPYTILSHPHVEEAIKHTYCDRICGECSLESSAQLEECKKATEEVNKPVEEEPRQDHGHHEHGHHEHQGEAERHRHGHHHPHHHHHHHRGQQQVDVDQQVLSQVDFGQVAVETPMMKRPUAKHSRUKVQYSUQQGADSPVASUCUHURQLFGGEGNGRVAGLUHCDEPLPASUPUQGLKEQDNHIKETUQURPAPPAEUELSQPTUVUPAGDATUGURKK.

The first 19 residues, 1–19 (MWKALSLTLALCLLVGCSA), serve as a signal peptide directing secretion. Residue selenocysteine 59 is a non-standard amino acid, selenocysteine. N-linked (GlcNAc...) asparagine glycosylation is present at asparagine 109. A compositionally biased stretch (basic and acidic residues) spans 191–220 (EVNKPVEEEPRQDHGHHEHGHHEHQGEAER). Residues 191-241 (EVNKPVEEEPRQDHGHHEHGHHEHQGEAERHRHGHHHPHHHHHHHRGQQQV) form a disordered region. Basic residues predominate over residues 221–237 (HRHGHHHPHHHHHHHRG). Non-standard amino acids (selenocysteine) are located at selenocysteine 267, selenocysteine 273, selenocysteine 279, selenocysteine 290, selenocysteine 292, selenocysteine 294, selenocysteine 310, selenocysteine 320, selenocysteine 322, selenocysteine 336, selenocysteine 338, selenocysteine 346, selenocysteine 353, selenocysteine 355, selenocysteine 362, and selenocysteine 364. Positions 309-367 (LUHCDEPLPASUPUQGLKEQDNHIKETUQURPAPPAEUELSQPTUVUPAGDATUGURKK) are disordered. A compositionally biased stretch (basic and acidic residues) spans 326 to 336 (KEQDNHIKETU).

It belongs to the selenoprotein P family.

It is found in the secreted. Its function is as follows. Might be responsible for some of the extracellular antioxidant defense properties of selenium or might be involved in the transport of selenium. The chain is Selenoprotein Pa (sepp1a) from Danio rerio (Zebrafish).